The following is a 670-amino-acid chain: DNA ligase (670 aa).

NAD(+)-binding positions include 34 to 38, 83 to 84, and E112; these read DAEYD and SL. K114 (N6-AMP-lysine intermediate) is an active-site residue. R135, E169, K285, and K309 together coordinate NAD(+). Residues C403, C406, C421, and C426 each coordinate Zn(2+). The region spanning 589–670 is the BRCT domain; it reads PASSVLAGKT…FLQEISREEQ (82 aa).

This sequence belongs to the NAD-dependent DNA ligase family. LigA subfamily. The cofactor is Mg(2+). It depends on Mn(2+) as a cofactor.

The catalysed reaction is NAD(+) + (deoxyribonucleotide)n-3'-hydroxyl + 5'-phospho-(deoxyribonucleotide)m = (deoxyribonucleotide)n+m + AMP + beta-nicotinamide D-nucleotide.. Its function is as follows. DNA ligase that catalyzes the formation of phosphodiester linkages between 5'-phosphoryl and 3'-hydroxyl groups in double-stranded DNA using NAD as a coenzyme and as the energy source for the reaction. It is essential for DNA replication and repair of damaged DNA. This is DNA ligase from Geobacillus thermodenitrificans (strain NG80-2).